The chain runs to 62 residues: Calmodulin regulator protein PCP4 (62 aa).

The segment at 1–39 (MSERQGAGATNGKDKTSGENDGQKKVQEEFDIDMDAPET) is disordered. Positions 12–28 (GKDKTSGENDGQKKVQE) are enriched in basic and acidic residues. The segment at 28 to 40 (EEFDIDMDAPETE) is acidic; binds calcium and is required for modulating the calcium-binding kinetics of calmodulin. The 24-residue stretch at 39 to 62 (TERAAVAIQSQFRKFQKKKAGSQS) folds into the IQ domain.

This sequence belongs to the PCP4 family. Binds to both calcium-free and calcium-bound calmodulin. The affinity for the calcium-bound form is 50-fold greater.

Functions as a modulator of calcium-binding by calmodulin. Thereby, regulates calmodulin activity and the different processes it controls. For instance, may play a role in neuronal differentiation through activation of calmodulin-dependent kinase signaling pathways. The sequence is that of Calmodulin regulator protein PCP4 from Homo sapiens (Human).